Consider the following 786-residue polypeptide: Protein translocase subunit SecA 1 (786 aa).

Residues glutamine 85, glycine 103–threonine 107, and aspartate 491 contribute to the ATP site.

This sequence belongs to the SecA family. As to quaternary structure, monomer and homodimer. Part of the essential Sec protein translocation apparatus which comprises SecA, SecYEG and auxiliary proteins SecDF. Other proteins may also be involved.

The protein localises to the cell membrane. It localises to the cytoplasm. It catalyses the reaction ATP + H2O + cellular proteinSide 1 = ADP + phosphate + cellular proteinSide 2.. Its function is as follows. Part of the Sec protein translocase complex. Interacts with the SecYEG preprotein conducting channel. Has a central role in coupling the hydrolysis of ATP to the transfer of proteins into and across the cell membrane, serving as an ATP-driven molecular motor driving the stepwise translocation of polypeptide chains across the membrane. The sequence is that of Protein translocase subunit SecA 1 from Pediococcus pentosaceus (strain ATCC 25745 / CCUG 21536 / LMG 10740 / 183-1w).